A 98-amino-acid polypeptide reads, in one-letter code: NADH-ubiquinone oxidoreductase chain 4L (98 aa).

A run of 3 helical transmembrane segments spans residues Met-1–Ile-21, Leu-26–Leu-46, and Ile-61–Val-81.

The protein belongs to the complex I subunit 4L family. In terms of assembly, core subunit of respiratory chain NADH dehydrogenase (Complex I) which is composed of 45 different subunits.

The protein resides in the mitochondrion inner membrane. It catalyses the reaction a ubiquinone + NADH + 5 H(+)(in) = a ubiquinol + NAD(+) + 4 H(+)(out). Core subunit of the mitochondrial membrane respiratory chain NADH dehydrogenase (Complex I) which catalyzes electron transfer from NADH through the respiratory chain, using ubiquinone as an electron acceptor. Part of the enzyme membrane arm which is embedded in the lipid bilayer and involved in proton translocation. The sequence is that of NADH-ubiquinone oxidoreductase chain 4L (MT-ND4L) from Galago senegalensis (Northern lesser bushbaby).